A 286-amino-acid chain; its full sequence is Phosphatidylglycerol--prolipoprotein diacylglyceryl transferase (286 aa).

7 consecutive transmembrane segments (helical) span residues 24–44, 72–92, 104–124, 140–160, 190–210, 218–238, and 253–273; these read IGPL…LFAW, FIVW…VLFY, IFAV…VILA, FDVV…ANFI, LYEA…LTHS, RFVG…VEFF, and WLTM…WAMA. An a 1,2-diacyl-sn-glycero-3-phospho-(1'-sn-glycerol)-binding site is contributed by arginine 155.

It belongs to the Lgt family.

It localises to the cell inner membrane. The catalysed reaction is L-cysteinyl-[prolipoprotein] + a 1,2-diacyl-sn-glycero-3-phospho-(1'-sn-glycerol) = an S-1,2-diacyl-sn-glyceryl-L-cysteinyl-[prolipoprotein] + sn-glycerol 1-phosphate + H(+). It participates in protein modification; lipoprotein biosynthesis (diacylglyceryl transfer). Catalyzes the transfer of the diacylglyceryl group from phosphatidylglycerol to the sulfhydryl group of the N-terminal cysteine of a prolipoprotein, the first step in the formation of mature lipoproteins. The protein is Phosphatidylglycerol--prolipoprotein diacylglyceryl transferase of Mesorhizobium japonicum (strain LMG 29417 / CECT 9101 / MAFF 303099) (Mesorhizobium loti (strain MAFF 303099)).